The following is a 141-amino-acid chain: VLSDNDKTNVKATWSKVGDHASDYVAEALERMFFSFPTTKTYFPHFDLGHGSGQVKAHGKKVGEALTQAVGHLDDLPSALSALSDLHAHKLRVDPVNFKLLSHCLLVTLSSHQPTEFTPEVHASLDKFLSNVSTVLTSKYR.

A Globin domain is found at Val1–Arg141. Ser3 carries the phosphoserine modification. Lys7 is modified (N6-succinyllysine). At Thr8 the chain carries Phosphothreonine. Lys11 carries the N6-succinyllysine modification. An N6-acetyllysine; alternate modification is found at Lys16. The residue at position 16 (Lys16) is an N6-succinyllysine; alternate. At Tyr24 the chain carries Phosphotyrosine. At Ser35 the chain carries Phosphoserine. N6-succinyllysine is present on Lys40. His58 serves as a coordination point for O2. His87 contributes to the heme b binding site. Ser102 is subject to Phosphoserine. Phosphothreonine is present on Thr108. Ser124 is subject to Phosphoserine. Phosphothreonine is present on residues Thr134 and Thr137. Residue Ser138 is modified to Phosphoserine.

Belongs to the globin family. As to quaternary structure, heterotetramer of two alpha chains and two beta chains. As to expression, red blood cells.

Its function is as follows. Involved in oxygen transport from the lung to the various peripheral tissues. Hemopressin acts as an antagonist peptide of the cannabinoid receptor CNR1. Hemopressin-binding efficiently blocks cannabinoid receptor CNR1 and subsequent signaling. The polypeptide is Hemoglobin subunit alpha (HBA) (Loxodonta africana (African elephant)).